We begin with the raw amino-acid sequence, 110 residues long: UPF0122 protein lwe1821 (110 aa).

It belongs to the UPF0122 family.

In terms of biological role, might take part in the signal recognition particle (SRP) pathway. This is inferred from the conservation of its genetic proximity to ftsY/ffh. May be a regulatory protein. The sequence is that of UPF0122 protein lwe1821 from Listeria welshimeri serovar 6b (strain ATCC 35897 / DSM 20650 / CCUG 15529 / CIP 8149 / NCTC 11857 / SLCC 5334 / V8).